The primary structure comprises 1048 residues: Pleckstrin homology domain-containing family A member 6 (1048 aa).

Positions 1–22 (MSNKTGGKRPATTNSDIPNHNM) are enriched in polar residues. The tract at residues 1 to 36 (MSNKTGGKRPATTNSDIPNHNMVSEVPPERPSVRAT) is disordered. The PH domain maps to 59–158 (PVTKAGWLFK…WIQAMGEAAR (100 aa)). 2 disordered regions span residues 165 to 318 (QKSV…MNQL) and 448 to 467 (SLQPRSHSVPRSPSQGSYSR). Basic and acidic residues predominate over residues 201–233 (PEPEAKTRGEGDGRGCEKAERRPERPEVKKEPP). Residues S247 and S251 each carry the phosphoserine modification. Over residues 267 to 290 (AQPNGWQYHSPSRPGSTAFPSQDG) the composition is skewed to polar residues. Residues S314, S459, S461, and S472 each carry the phosphoserine modification. Residues 456 to 465 (VPRSPSQGSY) are compositionally biased toward polar residues. Residue Y492 is modified to Phosphotyrosine. S591 is subject to Phosphoserine. The disordered stretch occupies residues 663-746 (RKNNPSRGTD…HQTLPLDTPR (84 aa)). Positions 687-711 (SSNSPASPLSSASLTSPLSPFSLVS) are enriched in low complexity. Over residues 712 to 721 (GSQGSPTKPG) the composition is skewed to polar residues. Residue T744 is modified to Phosphothreonine. Residue S777 is modified to Phosphoserine. At T784 the chain carries Phosphothreonine. Residues 793–858 (ASGLTNGLSS…PAPDPSPRPA (66 aa)) form a disordered region. Over residues 794–803 (SGLTNGLSSQ) the composition is skewed to polar residues. S801 is subject to Phosphoserine. Basic and acidic residues predominate over residues 815–827 (GKVKMSVEEQIDR). Over residues 828–842 (MRRHQSGSMREKRRS) the composition is skewed to basic residues. A phosphoserine mark is found at S848, S854, and S867. T920 carries the post-translational modification Phosphothreonine. S940 carries the post-translational modification Phosphoserine. 2 disordered regions span residues 968–989 (PIGEGDSVDVPQDSESQLQEQE) and 1005–1048 (RGRM…TMRV). A Phosphothreonine modification is found at T1015. The segment covering 1016–1030 (PSPPTSPASPAPPAN) has biased composition (pro residues). A Phosphoserine modification is found at S1017. Position 1020 is a phosphothreonine (T1020). S1021 and S1024 each carry phosphoserine.

In terms of tissue distribution, highly expressed in heart, kidney and throughout the brain.

In Homo sapiens (Human), this protein is Pleckstrin homology domain-containing family A member 6 (PLEKHA6).